We begin with the raw amino-acid sequence, 202 residues long: Endothelin-1 (202 aa).

A signal peptide spans 1 to 25 (MDYFPVIFSLLFVAFQGAPETAVLG). A propeptide spanning residues 26 to 50 (AELSPRAEKEVQSPPPSTSWRPRRS) is cleaved from the precursor. The tract at residues 28 to 47 (LSPRAEKEVQSPPPSTSWRP) is disordered. 2 cysteine pairs are disulfide-bonded: cysteine 53-cysteine 67 and cysteine 55-cysteine 63. A propeptide spanning residues 74-202 (VNTPERVVPY…DQKLIHNRAH (129 aa)) is cleaved from the precursor. The endothelin-like stretch occupies residues 110 to 124 (CQCAHQKDKKCWNFC).

It belongs to the endothelin/sarafotoxin family.

It is found in the secreted. Its function is as follows. Endothelins are endothelium-derived vasoconstrictor peptides. Probable ligand for G-protein coupled receptors EDNRA and EDNRB which activates PTK2B, BCAR1, BCAR3 and, GTPases RAP1 and RHOA cascade in glomerular mesangial cells. Also binds the DEAR/FBXW7-AS1 receptor. Promotes mesenteric arterial wall remodeling via activation of ROCK signaling and subsequent colocalization of NFATC3 with F-actin filaments. NFATC3 then translocates to the nucleus where it subsequently promotes the transcription of the smooth muscle hypertrophy and differentiation marker ACTA2. In Rattus norvegicus (Rat), this protein is Endothelin-1 (Edn1).